We begin with the raw amino-acid sequence, 727 residues long: DNA topoisomerase 3 (727 aa).

Residues 3–136 (KTVVLAEKPS…LKRLWISSVT (134 aa)) form the Toprim domain. Positions 9 and 105 each coordinate Mg(2+). Positions 153–592 (FENLYHSAVA…EMKEYAKQTI (440 aa)) constitute a Topo IA-type catalytic domain. The segment at 187–192 (SCGRVQ) is interaction with DNA. Residue Tyr310 is the O-(5'-phospho-DNA)-tyrosine intermediate of the active site. Residues 685–711 (RRAKDKNSKASKRDVHSYMKKQNKDEP) show a composition bias toward basic and acidic residues. The disordered stretch occupies residues 685-713 (RRAKDKNSKASKRDVHSYMKKQNKDEPIN).

This sequence belongs to the type IA topoisomerase family. Requires Mg(2+) as cofactor.

The enzyme catalyses ATP-independent breakage of single-stranded DNA, followed by passage and rejoining.. In terms of biological role, releases the supercoiling and torsional tension of DNA, which is introduced during the DNA replication and transcription, by transiently cleaving and rejoining one strand of the DNA duplex. Introduces a single-strand break via transesterification at a target site in duplex DNA. The scissile phosphodiester is attacked by the catalytic tyrosine of the enzyme, resulting in the formation of a DNA-(5'-phosphotyrosyl)-enzyme intermediate and the expulsion of a 3'-OH DNA strand. The free DNA strand then undergoes passage around the unbroken strand, thus removing DNA supercoils. Finally, in the religation step, the DNA 3'-OH attacks the covalent intermediate to expel the active-site tyrosine and restore the DNA phosphodiester backbone. The sequence is that of DNA topoisomerase 3 from Bacillus licheniformis (strain ATCC 14580 / DSM 13 / JCM 2505 / CCUG 7422 / NBRC 12200 / NCIMB 9375 / NCTC 10341 / NRRL NRS-1264 / Gibson 46).